The primary structure comprises 297 residues: MAVSATDLKESRILLYYCFTPIADPTAIMLWQKQLCESLGLTGRILISEHGINGTVGGSLHACKQYARRTREYPGFKGMEFKWSQGGAEDFPRLSVKVRDEIVSFGAPGELKVDENGVIGGGTHLKPEEVNKLVEERGDDVVFFDGRNAMEAEIGRFKNAVVPDVETTHDFIKELESGKYDWMKDKPVVSYCTGGIRCEVLSALMKNRGFEEVYQIDGGIVRYGEKYGDKGLWEGSLYVFDKRMHMEFSEEAKQLGFCKNCGAATNTFHNCENSECREQILLCEDCAADPAVTCGEC.

The Rhodanese domain maps to Arg137–Leu232. The active-site Cysteine persulfide intermediate is the Cys192.

It belongs to the TrhO family.

The enzyme catalyses uridine(34) in tRNA + AH2 + O2 = 5-hydroxyuridine(34) in tRNA + A + H2O. In terms of biological role, catalyzes oxygen-dependent 5-hydroxyuridine (ho5U) modification at position 34 in tRNAs. In Corynebacterium urealyticum (strain ATCC 43042 / DSM 7109), this protein is tRNA uridine(34) hydroxylase.